The following is a 616-amino-acid chain: Dihydroxy-acid dehydratase (616 aa).

D81 is a Mg(2+) binding site. C122 serves as a coordination point for [2Fe-2S] cluster. Mg(2+) contacts are provided by D123 and K124. K124 is modified (N6-carboxylysine). C195 is a [2Fe-2S] cluster binding site. E491 is a Mg(2+) binding site. S517 (proton acceptor) is an active-site residue.

It belongs to the IlvD/Edd family. As to quaternary structure, homodimer. The cofactor is [2Fe-2S] cluster. Mg(2+) serves as cofactor.

The catalysed reaction is (2R)-2,3-dihydroxy-3-methylbutanoate = 3-methyl-2-oxobutanoate + H2O. It carries out the reaction (2R,3R)-2,3-dihydroxy-3-methylpentanoate = (S)-3-methyl-2-oxopentanoate + H2O. The protein operates within amino-acid biosynthesis; L-isoleucine biosynthesis; L-isoleucine from 2-oxobutanoate: step 3/4. Its pathway is amino-acid biosynthesis; L-valine biosynthesis; L-valine from pyruvate: step 3/4. In terms of biological role, functions in the biosynthesis of branched-chain amino acids. Catalyzes the dehydration of (2R,3R)-2,3-dihydroxy-3-methylpentanoate (2,3-dihydroxy-3-methylvalerate) into 2-oxo-3-methylpentanoate (2-oxo-3-methylvalerate) and of (2R)-2,3-dihydroxy-3-methylbutanoate (2,3-dihydroxyisovalerate) into 2-oxo-3-methylbutanoate (2-oxoisovalerate), the penultimate precursor to L-isoleucine and L-valine, respectively. This chain is Dihydroxy-acid dehydratase, found in Serratia proteamaculans (strain 568).